Reading from the N-terminus, the 529-residue chain is N5-hydroxyornithine acetylase sidL (529 aa).

2 disordered regions span residues 59 to 95 (ASVN…VRPF) and 239 to 258 (SPWP…SPVA). His462 contacts substrate. Glu498 (proton acceptor) is an active-site residue.

It belongs to the lysine N-acyltransferase mbtK family.

Its subcellular location is the cytoplasm. It is found in the cytosol. It participates in siderophore biosynthesis. Acyltransferase; part of the gene cluster that mediates the biosynthesis of at least 11 siderophores, including beauverichelin A, dimerumic acid (DA), Na-dimethyl coprogen (NADC), eleutherazine B, ferricrocin (FC), fusarinine A, fusarinine C (FsC), metachelin A, mevalonolactone, rhodotorulic acid (RA) and tenellin. This cocktail of siderophores for iron metabolism is essential for virulence, and more specifically for the fungal virulence in penetrating through the host cuticle. Siderophore synthesis is also involved in conidial germination under iron-deficient conditions. SIDL contributes to partial production of ferricrocin under iron-limiting conditions via the acetylation of N(5)-hydroxyornithine. The polypeptide is N5-hydroxyornithine acetylase sidL (Beauveria bassiana (strain ARSEF 2860) (White muscardine disease fungus)).